The chain runs to 213 residues: MESWLLVILAFLVLERLWPLIDSLIQRFAQANSTKLKELMHQRQAILAEQKEISAQDQYVKWTKNNRTLEKINKQIEEEKKQLLSQVDRTKASLKKVKLVLITVPFTILKFYKGKMPIYDLPKGLFPNYLQGLFQHGWVYLALGPLNIKKVGDGTHVTVSLAIWLFALLKVVSTLGNIWESLTAPAIPAPTITTDPIDQTNESEKPPVDQPVD.

Over 1-4 (MESW) the chain is Lumenal. A helical transmembrane segment spans residues 5–25 (LLVILAFLVLERLWPLIDSLI). At 26-98 (QRFAQANSTK…RTKASLKKVK (73 aa)) the chain is on the cytoplasmic side. Positions 55–99 (AQDQYVKWTKNNRTLEKINKQIEEEKKQLLSQVDRTKASLKKVKL) form a coiled coil. A helical transmembrane segment spans residues 99-119 (LVLITVPFTILKFYKGKMPIY). Topologically, residues 120 to 158 (DLPKGLFPNYLQGLFQHGWVYLALGPLNIKKVGDGTHVT) are lumenal. The chain crosses the membrane as a helical span at residues 159 to 175 (VSLAIWLFALLKVVSTL). At 176-213 (GNIWESLTAPAIPAPTITTDPIDQTNESEKPPVDQPVD) the chain is on the cytoplasmic side. The disordered stretch occupies residues 193–213 (TTDPIDQTNESEKPPVDQPVD).

This sequence belongs to the WRB/GET1 family. As to quaternary structure, component of the Golgi to ER traffic (GET) complex, which is composed of GET1, GET2 and GET3. Within the complex, GET1 and GET2 form a heterotetramer which is stabilized by phosphatidylinositol binding and which binds to the GET3 homodimer.

The protein resides in the endoplasmic reticulum membrane. Its subcellular location is the golgi apparatus membrane. Required for the post-translational delivery of tail-anchored (TA) proteins to the endoplasmic reticulum. Together with GET2, acts as a membrane receptor for soluble GET3, which recognizes and selectively binds the transmembrane domain of TA proteins in the cytosol. The GET complex cooperates with the HDEL receptor ERD2 to mediate the ATP-dependent retrieval of resident ER proteins that contain a C-terminal H-D-E-L retention signal from the Golgi to the ER. The protein is Golgi to ER traffic protein 1 of Kluyveromyces lactis (strain ATCC 8585 / CBS 2359 / DSM 70799 / NBRC 1267 / NRRL Y-1140 / WM37) (Yeast).